A 58-amino-acid polypeptide reads, in one-letter code: Sperm protamine P2 (58 aa).

Residues 1–58 form a disordered region; the sequence is RRRRRRGKGRGKKRKGKGKKRGKGRRRGSKGRKKKKGKGKKRKRRRRRRRKGSKGKGK.

As to expression, gonads.

Its subcellular location is the nucleus. The protein resides in the chromosome. Functionally, protamines substitute for histones in the chromatin of sperm during the haploid phase of spermatogenesis. They compact sperm DNA into a highly condensed, stable and inactive complex. This chain is Sperm protamine P2, found in Bolinus brandaris (Purple dye murex).